A 325-amino-acid chain; its full sequence is Small ribosomal subunit biogenesis GTPase RsgA (325 aa).

The region spanning 80-241 (LSKQIHIIAS…IIDTPGIKGF (162 aa)) is the CP-type G domain. Residues 129–132 (NKID) and 183–191 (GHSGVGKST) contribute to the GTP site. Cys265, Cys270, His272, and Cys278 together coordinate Zn(2+).

It belongs to the TRAFAC class YlqF/YawG GTPase family. RsgA subfamily. In terms of assembly, monomer. Associates with 30S ribosomal subunit, binds 16S rRNA. Zn(2+) serves as cofactor.

Its subcellular location is the cytoplasm. Functionally, one of several proteins that assist in the late maturation steps of the functional core of the 30S ribosomal subunit. Helps release RbfA from mature subunits. May play a role in the assembly of ribosomal proteins into the subunit. Circularly permuted GTPase that catalyzes slow GTP hydrolysis, GTPase activity is stimulated by the 30S ribosomal subunit. This chain is Small ribosomal subunit biogenesis GTPase RsgA, found in Flavobacterium johnsoniae (strain ATCC 17061 / DSM 2064 / JCM 8514 / BCRC 14874 / CCUG 350202 / NBRC 14942 / NCIMB 11054 / UW101) (Cytophaga johnsonae).